The following is a 201-amino-acid chain: LexA repressor (201 aa).

The segment at residues 29–49 is a DNA-binding region (H-T-H motif); the sequence is VREICKAVGLSSTSSVHFHLK. Residues serine 125 and lysine 162 each act as for autocatalytic cleavage activity in the active site.

The protein belongs to the peptidase S24 family. As to quaternary structure, homodimer.

It catalyses the reaction Hydrolysis of Ala-|-Gly bond in repressor LexA.. Functionally, represses a number of genes involved in the response to DNA damage (SOS response), including recA and lexA. In the presence of single-stranded DNA, RecA interacts with LexA causing an autocatalytic cleavage which disrupts the DNA-binding part of LexA, leading to derepression of the SOS regulon and eventually DNA repair. This Clostridium botulinum (strain 657 / Type Ba4) protein is LexA repressor.